A 148-amino-acid polypeptide reads, in one-letter code: Urease accessory protein UreE (148 aa).

This sequence belongs to the UreE family.

Its subcellular location is the cytoplasm. Functionally, involved in urease metallocenter assembly. Binds nickel. Probably functions as a nickel donor during metallocenter assembly. This chain is Urease accessory protein UreE, found in Aliarcobacter butzleri (strain RM4018) (Arcobacter butzleri).